Reading from the N-terminus, the 335-residue chain is Ubiquinone biosynthesis protein COQ4, mitochondrial (335 aa).

The transit peptide at 1-10 (MLRLSLLRST) directs the protein to the mitochondrion. Positions 210, 211, 214, and 226 each coordinate Zn(2+).

It belongs to the COQ4 family. As to quaternary structure, component of a multi-subunit COQ enzyme complex, composed of at least COQ3, COQ4, COQ5, COQ6, COQ7 and COQ9. Interacts with COQ3. Zn(2+) is required as a cofactor.

The protein resides in the mitochondrion inner membrane. The catalysed reaction is 4-hydroxy-3-methoxy-5-(all-trans-hexaprenyl)benzoate + H(+) = 2-methoxy-6-(all-trans-hexaprenyl)phenol + CO2. It functions in the pathway cofactor biosynthesis; ubiquinone biosynthesis. In terms of biological role, lyase that catalyzes the C1-decarboxylation of 4-hydroxy-3-methoxy-5-(all-trans-hexaprenyl)benzoic acid into 2-methoxy-6-(all-trans-hexaprenyl)phenol during ubiquinone biosynthesis. This is Ubiquinone biosynthesis protein COQ4, mitochondrial from Saccharomyces cerevisiae (strain YJM789) (Baker's yeast).